The sequence spans 100 residues: NADH-quinone oxidoreductase subunit K (100 aa).

3 helical membrane passes run 4-24 (LSNY…GVLT), 29-49 (IVVF…FVAF), and 60-80 (IFVF…LALF).

Belongs to the complex I subunit 4L family. As to quaternary structure, NDH-1 is composed of 14 different subunits. Subunits NuoA, H, J, K, L, M, N constitute the membrane sector of the complex.

It is found in the cell inner membrane. It catalyses the reaction a quinone + NADH + 5 H(+)(in) = a quinol + NAD(+) + 4 H(+)(out). Functionally, NDH-1 shuttles electrons from NADH, via FMN and iron-sulfur (Fe-S) centers, to quinones in the respiratory chain. The immediate electron acceptor for the enzyme in this species is believed to be ubiquinone. Couples the redox reaction to proton translocation (for every two electrons transferred, four hydrogen ions are translocated across the cytoplasmic membrane), and thus conserves the redox energy in a proton gradient. The protein is NADH-quinone oxidoreductase subunit K of Trichlorobacter lovleyi (strain ATCC BAA-1151 / DSM 17278 / SZ) (Geobacter lovleyi).